A 95-amino-acid chain; its full sequence is Integration host factor subunit beta (95 aa).

It belongs to the bacterial histone-like protein family. Heterodimer of an alpha and a beta chain.

In terms of biological role, this protein is one of the two subunits of integration host factor, a specific DNA-binding protein that functions in genetic recombination as well as in transcriptional and translational control. This chain is Integration host factor subunit beta, found in Erwinia tasmaniensis (strain DSM 17950 / CFBP 7177 / CIP 109463 / NCPPB 4357 / Et1/99).